The primary structure comprises 89 residues: Omega-theraphotoxin-Ba1c (89 aa).

The signal sequence occupies residues 1 to 23; the sequence is MRSLTLAAVLACSLLLVFHTSAA. Positions 24–50 are excised as a propeptide; sequence EEHEAQEGYLMNPGDTDTALATVDDER. Cystine bridges form between Cys54/Cys75, Cys58/Cys81, and Cys67/Cys86.

It belongs to the neurotoxin 12 (Hwtx-2) family. 06 (TXP1) subfamily. Expressed by the venom gland.

It is found in the secreted. Its function is as follows. Inhibits voltage-gated calcium channels (Cav) in rat cerebellar granule cells. Has insecticidal activity. This Brachypelma albiceps (Mexican golden redrump tarantula) protein is Omega-theraphotoxin-Ba1c.